A 149-amino-acid polypeptide reads, in one-letter code: Large ribosomal subunit protein uL15 (149 aa).

The disordered stretch occupies residues Met1–Leu61. Positions Thr30–Lys39 are enriched in basic residues.

It belongs to the universal ribosomal protein uL15 family. As to quaternary structure, part of the 50S ribosomal subunit.

Binds to the 23S rRNA. This Trichlorobacter lovleyi (strain ATCC BAA-1151 / DSM 17278 / SZ) (Geobacter lovleyi) protein is Large ribosomal subunit protein uL15.